The following is a 242-amino-acid chain: Ribosomal RNA large subunit methyltransferase E (242 aa).

Residues Gly-64, Trp-66, Asp-84, Asp-100, and Asp-125 each coordinate S-adenosyl-L-methionine. Residue Lys-165 is the Proton acceptor of the active site. The interval 198–242 (SSETFLLGRGLKKASPNGLDSRSGTAAEPAPLVPIGTNSMPANGD) is disordered. The span at 233 to 242 (GTNSMPANGD) shows a compositional bias: polar residues.

The protein belongs to the class I-like SAM-binding methyltransferase superfamily. RNA methyltransferase RlmE family.

Its subcellular location is the cytoplasm. The catalysed reaction is uridine(2552) in 23S rRNA + S-adenosyl-L-methionine = 2'-O-methyluridine(2552) in 23S rRNA + S-adenosyl-L-homocysteine + H(+). In terms of biological role, specifically methylates the uridine in position 2552 of 23S rRNA at the 2'-O position of the ribose in the fully assembled 50S ribosomal subunit. The sequence is that of Ribosomal RNA large subunit methyltransferase E from Verminephrobacter eiseniae (strain EF01-2).